The sequence spans 634 residues: CRISPR-associated protein MJ1674 (634 aa).

Its function is as follows. CRISPR (clustered regularly interspaced short palindromic repeat) is an adaptive immune system that provides protection against mobile genetic elements (viruses, transposable elements and conjugative plasmids). CRISPR clusters contain spacers, sequences complementary to antecedent mobile elements, and target invading nucleic acids. CRISPR clusters are transcribed and processed into CRISPR RNA (crRNA). The type III Csm effector complex binds crRNA and acts as a crRNA-guided RNase, DNase and cyclic oligoadenylate synthase; binding of target RNA cognate to the crRNA is required for all activities. In Methanocaldococcus jannaschii (strain ATCC 43067 / DSM 2661 / JAL-1 / JCM 10045 / NBRC 100440) (Methanococcus jannaschii), this protein is CRISPR-associated protein MJ1674.